The primary structure comprises 117 residues: Large ribosomal subunit protein bL20 (117 aa).

Belongs to the bacterial ribosomal protein bL20 family.

Its function is as follows. Binds directly to 23S ribosomal RNA and is necessary for the in vitro assembly process of the 50S ribosomal subunit. It is not involved in the protein synthesizing functions of that subunit. The sequence is that of Large ribosomal subunit protein bL20 from Histophilus somni (strain 129Pt) (Haemophilus somnus).